The sequence spans 88 residues: Small ribosomal subunit protein uS17 (88 aa).

It belongs to the universal ribosomal protein uS17 family. Part of the 30S ribosomal subunit.

Functionally, one of the primary rRNA binding proteins, it binds specifically to the 5'-end of 16S ribosomal RNA. The chain is Small ribosomal subunit protein uS17 from Azotobacter vinelandii (strain DJ / ATCC BAA-1303).